Reading from the N-terminus, the 363-residue chain is Trichocyst matrix protein T4-B (363 aa).

An N-terminal signal peptide occupies residues 1 to 17; it reads MARSLTILAIVFAVATA. A propeptide spanning residues 18 to 52 is cleaved from the precursor; the sequence is RVTKSESPKEILAQVNKDSFGNSILSVLQLQLATG. The stretch at 85 to 119 forms a coiled coil; sequence VAFEKIIADLEQEIAYHQTQIVALSNLRDSTTEAL. Residues 190 to 221 constitute a propeptide that is removed on maturation; sequence RFEKVQAKLMESKHALFKPLINALTQLASKVD. Positions 244-352 form a coiled coil; it reads ASLLATEERQ…EVLTQKLSAA (109 aa).

The protein belongs to the TMP family. In terms of processing, two components are produced by post-translational processing from the precursor peptide.

It is found in the trichocyst. In terms of biological role, structural protein that crystallize inside the trichocyst matrix. The protein is Trichocyst matrix protein T4-B (T4B) of Paramecium tetraurelia.